We begin with the raw amino-acid sequence, 156 residues long: Ribosomal RNA large subunit methyltransferase H (156 aa).

Residues Leu73, Gly104, and 123–128 (LSSLTL) contribute to the S-adenosyl-L-methionine site.

This sequence belongs to the RNA methyltransferase RlmH family. In terms of assembly, homodimer.

The protein resides in the cytoplasm. The catalysed reaction is pseudouridine(1915) in 23S rRNA + S-adenosyl-L-methionine = N(3)-methylpseudouridine(1915) in 23S rRNA + S-adenosyl-L-homocysteine + H(+). Its function is as follows. Specifically methylates the pseudouridine at position 1915 (m3Psi1915) in 23S rRNA. In Neisseria meningitidis serogroup C / serotype 2a (strain ATCC 700532 / DSM 15464 / FAM18), this protein is Ribosomal RNA large subunit methyltransferase H.